The chain runs to 400 residues: Argininosuccinate synthase (400 aa).

ATP-binding positions include 11–19 and Ala38; that span reads AYSGGLDTS. Positions 89 and 94 each coordinate L-citrulline. Gly119 is an ATP binding site. Residues Thr121, Asn125, and Asp126 each contribute to the L-aspartate site. Asn125 lines the L-citrulline pocket. 5 residues coordinate L-citrulline: Arg129, Ser179, Ser188, Glu264, and Tyr276.

It belongs to the argininosuccinate synthase family. Type 1 subfamily. In terms of assembly, homotetramer.

The protein resides in the cytoplasm. It catalyses the reaction L-citrulline + L-aspartate + ATP = 2-(N(omega)-L-arginino)succinate + AMP + diphosphate + H(+). It functions in the pathway amino-acid biosynthesis; L-arginine biosynthesis; L-arginine from L-ornithine and carbamoyl phosphate: step 2/3. The protein is Argininosuccinate synthase of Oleidesulfovibrio alaskensis (strain ATCC BAA-1058 / DSM 17464 / G20) (Desulfovibrio alaskensis).